Consider the following 148-residue polypeptide: Probable TtuB-protein conjugate cleaving protease (148 aa).

The MPN domain maps to 22-148 (HGLVLYVPRG…EGQEVALVVL (127 aa)). Glu47 acts as the Proton donor/acceptor in catalysis. Residues His101, His103, and Asp114 each coordinate Zn(2+). Positions 101 to 114 (HSHPKGPALPSPRD) match the JAMM motif motif.

Belongs to the peptidase M67B family. It depends on Zn(2+) as a cofactor.

Probable metalloprotease that cleaves the ubiquitin-like modifier protein TtuB from protein conjugates, hydrolyzing the isopeptide bond between a lysine residue of the target protein and the C-terminal glycine of the modifier protein. Does not seem to work for all the TtuB conjugates. In Thermus thermophilus (strain ATCC BAA-163 / DSM 7039 / HB27), this protein is Probable TtuB-protein conjugate cleaving protease.